We begin with the raw amino-acid sequence, 524 residues long: Serine/threonine-protein phosphatase 2A 56 kDa regulatory subunit gamma isoform (524 aa).

Residue methionine 1 is modified to N-acetylmethionine. Positions 472-489 (RKTVSDEARQAQKDPKKE) match the Nuclear localization signal motif. Positions 476 to 524 (SDEARQAQKDPKKERPLARRKSELPQDPHTKKALEAHCRADELVPQDGR) are disordered.

It belongs to the phosphatase 2A regulatory subunit B56 family. As to quaternary structure, PP2A consists of a common heterodimeric core enzyme, composed of PPP2CA a 36 kDa catalytic subunit (subunit C) and PPP2R1A a 65 kDa constant regulatory subunit (PR65 or subunit A), that associates with a variety of regulatory subunits. Proteins that associate with the core dimer include three families of regulatory subunits B (the R2/B/PR55/B55, R3/B''/PR72/PR130/PR59 and R5/B'/B56 families), the 48 kDa variable regulatory subunit, viral proteins, and cell signaling molecules. Interacts with SGO1. Interacts with SGO1; the interaction is direct. May interact with TP53. Interacts with IER3 and/or ERK kinases; regulates ERK dephosphorylation Interacts with CIP2A; this interaction stabilizes CIP2A. Highly expressed in testis, heart and spleen. Also found in brain and skeletal muscle.

It is found in the nucleus. Its subcellular location is the chromosome. It localises to the centromere. In terms of biological role, the B regulatory subunit might modulate substrate selectivity and catalytic activity, and might also direct the localization of the catalytic enzyme to a particular subcellular compartment. The PP2A-PPP2R5C holoenzyme may activate TP53 and play a role in DNA damage-induced inhibition of cell proliferation. PP2A-PPP2R5C may also regulate the ERK signaling pathway through ERK dephosphorylation. The polypeptide is Serine/threonine-protein phosphatase 2A 56 kDa regulatory subunit gamma isoform (PPP2R5C) (Oryctolagus cuniculus (Rabbit)).